A 357-amino-acid chain; its full sequence is 3-dehydroquinate synthase (357 aa).

Residues 104–108 (GVVGD), 128–129 (TT), Lys-141, and 168–171 (FLET) each bind NAD(+). Positions 183, 243, and 260 each coordinate Zn(2+).

This sequence belongs to the sugar phosphate cyclases superfamily. Dehydroquinate synthase family. Requires Co(2+) as cofactor. Zn(2+) is required as a cofactor. The cofactor is NAD(+).

The protein localises to the cytoplasm. It carries out the reaction 7-phospho-2-dehydro-3-deoxy-D-arabino-heptonate = 3-dehydroquinate + phosphate. The protein operates within metabolic intermediate biosynthesis; chorismate biosynthesis; chorismate from D-erythrose 4-phosphate and phosphoenolpyruvate: step 2/7. Functionally, catalyzes the conversion of 3-deoxy-D-arabino-heptulosonate 7-phosphate (DAHP) to dehydroquinate (DHQ). This is 3-dehydroquinate synthase from Streptococcus pyogenes serotype M5 (strain Manfredo).